The sequence spans 353 residues: Alternative oxidase, mitochondrial (353 aa).

The tract at residues 25 to 45 (FRSTDDEDENNPSTELATDTT) is disordered. The span at 35-45 (NPSTELATDTT) shows a compositional bias: polar residues. A helical membrane pass occupies residues 153–173 (FLFLESIAGVPGMVAGMIRHL). Glutamate 157, glutamate 196, and histidine 199 together coordinate Fe cation. The chain crosses the membrane as a helical span at residues 217-237 (LLIGQIIFYNLFFISYLISPA). Glutamate 247, glutamate 301, and histidine 304 together coordinate Fe cation.

Belongs to the alternative oxidase family. It depends on Fe cation as a cofactor.

It is found in the mitochondrion inner membrane. Its function is as follows. Catalyzes cyanide-resistant oxygen consumption. May increase respiration when the cytochrome respiratory pathway is restricted, or in response to low temperatures. The protein is Alternative oxidase, mitochondrial (AOX) of Yarrowia lipolytica (strain CLIB 122 / E 150) (Yeast).